We begin with the raw amino-acid sequence, 195 residues long: Dynactin subunit 6 (195 aa).

Belongs to the dynactin subunits 5/6 family. Dynactin subunit 6 subfamily. Member of the pointed-end complex of the dynactin shoulder complex which contains dctn4, dctn5 and dctn6 subunits and Actr10. Within the complex dctn6 forms a heterodimer with dctn5. Interacts with plk1.

It localises to the cytoplasm. The protein resides in the cytoskeleton. It is found in the chromosome. Its subcellular location is the centromere. The protein localises to the kinetochore. In terms of biological role, part of the dynactin complex that activates the molecular motor dynein for ultra-processive transport along microtubules. This is Dynactin subunit 6 (dctn6) from Danio rerio (Zebrafish).